Consider the following 112-residue polypeptide: Large ribosomal subunit protein uL22 (112 aa).

It belongs to the universal ribosomal protein uL22 family. As to quaternary structure, part of the 50S ribosomal subunit.

Functionally, this protein binds specifically to 23S rRNA; its binding is stimulated by other ribosomal proteins, e.g. L4, L17, and L20. It is important during the early stages of 50S assembly. It makes multiple contacts with different domains of the 23S rRNA in the assembled 50S subunit and ribosome. The globular domain of the protein is located near the polypeptide exit tunnel on the outside of the subunit, while an extended beta-hairpin is found that lines the wall of the exit tunnel in the center of the 70S ribosome. The chain is Large ribosomal subunit protein uL22 from Anaplasma phagocytophilum (strain HZ).